Here is a 57-residue protein sequence, read N- to C-terminus: uncharacterized protein (57 aa).

The N-terminal stretch at 1 to 24 is a signal peptide; it reads MYDTWFVLTAVVLFVLVLIGNVHG.

As to expression, prismatic layer of shell (at protein level).

Its subcellular location is the secreted. This is an uncharacterized protein from Margaritifera margaritifera (Freshwater pearl mussel).